Consider the following 267-residue polypeptide: Cyclin-C (267 aa).

The region spanning 48 to 151 is the Cyclin N-terminal domain; it reads IQVLGEQLKL…LLENLDCCLI (104 aa).

Belongs to the cyclin family. Cyclin C subfamily. Component of the Cdk8 module of the Mediator complex.

It localises to the nucleus. Component of the Mediator complex, a coactivator involved in regulated gene transcription of nearly all RNA polymerase II-dependent genes. Mediator functions as a bridge to convey information from gene-specific regulatory proteins to the basal RNA polymerase II transcription machinery. Mediator is recruited to promoters by direct interactions with regulatory proteins and serves as a scaffold for the assembly of a functional preinitiation complex with RNA polymerase II and the general transcription factors. Binds to and activates cyclin-dependent kinase Cdk8 that phosphorylates the CTD (C-terminal domain) of the large subunit of RNA polymerase II (RNAp II), which may inhibit the formation of a transcription initiation complex. The chain is Cyclin-C (CycC) from Drosophila pseudoobscura pseudoobscura (Fruit fly).